A 689-amino-acid polypeptide reads, in one-letter code: Glycine--tRNA ligase beta subunit (689 aa).

The protein belongs to the class-II aminoacyl-tRNA synthetase family. Tetramer of two alpha and two beta subunits.

Its subcellular location is the cytoplasm. It catalyses the reaction tRNA(Gly) + glycine + ATP = glycyl-tRNA(Gly) + AMP + diphosphate. In Salmonella choleraesuis (strain SC-B67), this protein is Glycine--tRNA ligase beta subunit.